The chain runs to 289 residues: Ribosomal protein L11 methyltransferase (289 aa).

S-adenosyl-L-methionine is bound by residues Thr142, Gly163, Asp185, and Asn226.

Belongs to the methyltransferase superfamily. PrmA family.

The protein resides in the cytoplasm. It catalyses the reaction L-lysyl-[protein] + 3 S-adenosyl-L-methionine = N(6),N(6),N(6)-trimethyl-L-lysyl-[protein] + 3 S-adenosyl-L-homocysteine + 3 H(+). Its function is as follows. Methylates ribosomal protein L11. The chain is Ribosomal protein L11 methyltransferase from Legionella pneumophila (strain Corby).